A 403-amino-acid chain; its full sequence is S-adenosylmethionine synthase (403 aa).

Histidine 15 is a binding site for ATP. Aspartate 17 is a Mg(2+) binding site. Glutamate 43 lines the K(+) pocket. Glutamate 56 and glutamine 99 together coordinate L-methionine. Residues 99–109 (QSPHIAQGVDR) form a flexible loop region. ATP contacts are provided by residues 166 to 168 (DAK), 232 to 233 (KF), aspartate 241, 247 to 248 (RK), alanine 264, and lysine 268. Position 241 (aspartate 241) interacts with L-methionine. Lysine 272 lines the L-methionine pocket.

Belongs to the AdoMet synthase family. As to quaternary structure, homotetramer; dimer of dimers. Mg(2+) serves as cofactor. Requires K(+) as cofactor.

Its subcellular location is the cytoplasm. It carries out the reaction L-methionine + ATP + H2O = S-adenosyl-L-methionine + phosphate + diphosphate. It functions in the pathway amino-acid biosynthesis; S-adenosyl-L-methionine biosynthesis; S-adenosyl-L-methionine from L-methionine: step 1/1. Catalyzes the formation of S-adenosylmethionine (AdoMet) from methionine and ATP. The overall synthetic reaction is composed of two sequential steps, AdoMet formation and the subsequent tripolyphosphate hydrolysis which occurs prior to release of AdoMet from the enzyme. The chain is S-adenosylmethionine synthase from Stenotrophomonas maltophilia (strain R551-3).